Here is a 155-residue protein sequence, read N- to C-terminus: Ribonuclease 8 (155 aa).

The signal sequence occupies residues 1 to 28 (MAPARAGCCPLLLLLLLGLWVAEIPVSA). Intrachain disulfides connect Cys-65–Cys-119, Cys-83–Cys-134, and Cys-90–Cys-97. Residues 66–70 (KDLNT) and Lys-91 contribute to the substrate site. Catalysis depends on His-150, which acts as the Proton donor.

The protein belongs to the pancreatic ribonuclease family.

It localises to the secreted. Has a low ribonuclease activity. This Saguinus oedipus (Cotton-top tamarin) protein is Ribonuclease 8 (RNASE8).